The primary structure comprises 283 residues: Lectin subunit alpha (283 aa).

Positions 1-23 are cleaved as a signal peptide; it reads MSLTMKNVEGFVIFLVIFTSTAA. In terms of domain architecture, C-type lectin spans 51-159; it reads HECARHDQQL…NVKMGYICEP (109 aa). 2 cysteine pairs are disulfide-bonded: cysteine 53-cysteine 157 and cysteine 132-cysteine 149.

Its function is as follows. Role in the defense system of the organism against microorganisms. This lectin binds galactose. The protein is Lectin subunit alpha of Sarcophaga peregrina (Flesh fly).